The sequence spans 102 residues: Methane monooxygenase component D (102 aa).

The soluble methane monooxygenase (sMMO) consists of four components A/MMOH (composed of alpha/MmoX, beta/MmoY and gamma/MmoZ), B/MMOB (MmoB), C/MMOR (MmoC) and D/MMOD (MmoD).

The protein is Methane monooxygenase component D (mmoD) of Methylosinus trichosporium.